Here is a 136-residue protein sequence, read N- to C-terminus: Histone H3.1/H3.2 (136 aa).

Positions methionine 1–lysine 43 are disordered. N6,N6,N6-trimethyllysine; alternate is present on lysine 5. An N6,N6-dimethyllysine; alternate modification is found at lysine 5. N6-methyllysine; alternate is present on residues lysine 5 and lysine 10. Lysine 10 is modified (N6-acetyllysine; alternate). Serine 11 carries the post-translational modification Phosphoserine. The residue at position 15 (lysine 15) is an N6,N6-dimethyllysine; alternate. 5 positions are modified to N6-acetyllysine; alternate: lysine 15, lysine 19, lysine 24, lysine 28, and lysine 37. Residues lysine 19, lysine 24, lysine 28, and lysine 37 each carry the N6-methyllysine; alternate modification. N6,N6,N6-trimethyllysine; alternate is present on residues lysine 28 and lysine 37. Lysine 28 and lysine 37 each carry N6,N6-dimethyllysine; alternate. Residues lysine 57 and lysine 65 each carry the N6-acetyllysine modification. N6,N6,N6-trimethyllysine; alternate is present on lysine 80. Residue lysine 80 is modified to N6,N6-dimethyllysine; alternate. Lysine 80 is subject to N6-methyllysine; alternate.

The protein belongs to the histone H3 family. In terms of assembly, the nucleosome is a histone octamer containing two molecules each of H2A, H2B, H3 and H4 assembled in one H3-H4 heterotetramer and two H2A-H2B heterodimers. The octamer wraps approximately 147 bp of DNA. Post-translationally, phosphorylated to form H3S10ph. H3S10ph promotes subsequent H3K14ac formation and is required for transcriptional activation through TBP recruitment to the promoters. In terms of processing, mono-, di- and trimethylated by the COMPASS complex to form H3K4me1/2/3. H3K4me activates gene expression by regulating transcription elongation and plays a role in telomere length maintenance. H3K4me enrichment correlates with transcription levels, and occurs in a 5' to 3' gradient with H3K4me3 enrichment at the 5'-end of genes, shifting to H3K4me2 and then H3K4me1. Methylated by SET2 to form H3K36me. H3K36me represses gene expression. Methylated by DOT1 to form H3K79me. H3K79me is required for association of SIR proteins with telomeric regions and for telomeric silencing. The COMPASS-mediated formation of H3K4me2/3 and the DOT1-mediated formation of H3K79me require H2BK123ub1. Acetylation of histone H3 leads to transcriptional activation. H3K14ac formation by GCN5 is promoted by H3S10ph. H3K14ac can also be formed by ESA1. H3K56ac formation occurs predominantly in newly synthesized H3 molecules during G1, S and G2/M of the cell cycle and may be involved in DNA repair.

It localises to the nucleus. It is found in the chromosome. Functionally, core component of nucleosome. Nucleosomes wrap and compact DNA into chromatin, limiting DNA accessibility to the cellular machineries which require DNA as a template. Histones thereby play a central role in transcription regulation, DNA repair, DNA replication and chromosomal stability. DNA accessibility is regulated via a complex set of post-translational modifications of histones, also called histone code, and nucleosome remodeling. The polypeptide is Histone H3.1/H3.2 (HHT1) (Lodderomyces elongisporus (strain ATCC 11503 / CBS 2605 / JCM 1781 / NBRC 1676 / NRRL YB-4239) (Yeast)).